Here is a 254-residue protein sequence, read N- to C-terminus: 3-deoxy-manno-octulosonate cytidylyltransferase (254 aa).

This sequence belongs to the KdsB family.

It is found in the cytoplasm. The enzyme catalyses 3-deoxy-alpha-D-manno-oct-2-ulosonate + CTP = CMP-3-deoxy-beta-D-manno-octulosonate + diphosphate. The protein operates within nucleotide-sugar biosynthesis; CMP-3-deoxy-D-manno-octulosonate biosynthesis; CMP-3-deoxy-D-manno-octulosonate from 3-deoxy-D-manno-octulosonate and CTP: step 1/1. It participates in bacterial outer membrane biogenesis; lipopolysaccharide biosynthesis. Functionally, activates KDO (a required 8-carbon sugar) for incorporation into bacterial lipopolysaccharide in Gram-negative bacteria. In Pseudomonas putida (strain GB-1), this protein is 3-deoxy-manno-octulosonate cytidylyltransferase.